The sequence spans 141 residues: MLNHDEKQLIKHAWEKVLGHQEDFGAEALERMFAVYPQTKTYFPHFDLHHDSEQIRHHGKKVVTALGDAVRHMDNLSEALSELSNLHAYNLRVDPVNFKLLSHCFQVVLAVHLADEYTPQVHVAYDKFLAAVSAVLAEKYR.

Residues 1-141 (MLNHDEKQLI…VSAVLAEKYR (141 aa)) form the Globin domain. 2 residues coordinate heme b: H58 and H87.

Belongs to the globin family. In terms of assembly, heterotetramer of two alpha-D chains and two beta chains. Red blood cells.

Functionally, involved in oxygen transport from the lung to the various peripheral tissues. The protein is Hemoglobin subunit alpha-D (HBAD) of Chrysemys picta bellii (Western painted turtle).